The chain runs to 387 residues: Gibberellic acid methyltransferase 2 (387 aa).

Tyr33 is a binding site for S-adenosyl-L-homocysteine. A gibberellin A4-binding site is contributed by Gln40. S-adenosyl-L-homocysteine contacts are provided by Cys74, Asn79, Asp113, Leu114, Ser146, and Phe147. 2 residues coordinate gibberellin A4: His167 and Trp168. Residues Asn185, Arg275, Asp276, Phe278, and Asn279 each coordinate Mg(2+).

This sequence belongs to the methyltransferase superfamily. Type-7 methyltransferase family. SABATH subfamily. The cofactor is Mg(2+). In terms of tissue distribution, expressed in siliques and germinating seeds. Not detected in leaves, stems, flowers and roots.

It carries out the reaction gibberellin A4 + S-adenosyl-L-methionine = O-methyl gibberellin A4 + S-adenosyl-L-homocysteine. Down-regulated by Zn(2+), Cu(2+) and Fe(3+). No effect of K(+), NH(4+), Na(+), Ca(2+), Mg(2+), Mn(2+) and Fe(2+). Functionally, methylates the carboxyl group of several gibberellins (GAs). Substrate preference is GA4 &gt; GA34 &gt; GA9 &gt; GA3 &gt; GA1 &gt; GA51 &gt; GA20. No activity with diterpenes abietic acid and ent-kaurenoic acid. The chain is Gibberellic acid methyltransferase 2 (GAMT2) from Arabidopsis thaliana (Mouse-ear cress).